Reading from the N-terminus, the 207-residue chain is Adenylyl-sulfate kinase (207 aa).

34 to 41 (GLSGSGKS) is an ATP binding site. Ser108 acts as the Phosphoserine intermediate in catalysis.

The protein belongs to the APS kinase family.

The enzyme catalyses adenosine 5'-phosphosulfate + ATP = 3'-phosphoadenylyl sulfate + ADP + H(+). It participates in sulfur metabolism; hydrogen sulfide biosynthesis; sulfite from sulfate: step 2/3. Its function is as follows. Catalyzes the synthesis of activated sulfate. This is Adenylyl-sulfate kinase from Lactiplantibacillus plantarum (strain ATCC BAA-793 / NCIMB 8826 / WCFS1) (Lactobacillus plantarum).